The primary structure comprises 171 residues: Lipoprotein signal peptidase (171 aa).

The next 3 helical transmembrane spans lie at 7-27, 64-84, and 88-108; these read GLIA…WLYF, LGRW…SVWM, and GSRL…GNAI. Catalysis depends on residues aspartate 118 and aspartate 136. The chain crosses the membrane as a helical span at residues 128–148; it reads SWYVFNVADAAIVAGVVGLIL.

Belongs to the peptidase A8 family.

Its subcellular location is the cell inner membrane. It carries out the reaction Release of signal peptides from bacterial membrane prolipoproteins. Hydrolyzes -Xaa-Yaa-Zaa-|-(S,diacylglyceryl)Cys-, in which Xaa is hydrophobic (preferably Leu), and Yaa (Ala or Ser) and Zaa (Gly or Ala) have small, neutral side chains.. Its pathway is protein modification; lipoprotein biosynthesis (signal peptide cleavage). Its function is as follows. This protein specifically catalyzes the removal of signal peptides from prolipoproteins. This chain is Lipoprotein signal peptidase, found in Methylorubrum extorquens (strain PA1) (Methylobacterium extorquens).